Here is a 491-residue protein sequence, read N- to C-terminus: Glutamyl-tRNA(Gln) amidotransferase subunit A (491 aa).

Residues Lys-79 and Ser-154 each act as charge relay system in the active site. Ser-178 acts as the Acyl-ester intermediate in catalysis.

This sequence belongs to the amidase family. GatA subfamily. As to quaternary structure, heterotrimer of A, B and C subunits.

The enzyme catalyses L-glutamyl-tRNA(Gln) + L-glutamine + ATP + H2O = L-glutaminyl-tRNA(Gln) + L-glutamate + ADP + phosphate + H(+). Functionally, allows the formation of correctly charged Gln-tRNA(Gln) through the transamidation of misacylated Glu-tRNA(Gln) in organisms which lack glutaminyl-tRNA synthetase. The reaction takes place in the presence of glutamine and ATP through an activated gamma-phospho-Glu-tRNA(Gln). This chain is Glutamyl-tRNA(Gln) amidotransferase subunit A, found in Natranaerobius thermophilus (strain ATCC BAA-1301 / DSM 18059 / JW/NM-WN-LF).